Here is a 448-residue protein sequence, read N- to C-terminus: Guanine deaminase (448 aa).

Zn(2+) contacts are provided by His74 and His76. Substrate contacts are provided by residues 76–79, 204–205, 231–234, and Asp319; these read HAPQ, RF, and HISE. His231 and Asp319 together coordinate Zn(2+).

This sequence belongs to the metallo-dependent hydrolases superfamily. ATZ/TRZ family. Requires Zn(2+) as cofactor.

It catalyses the reaction guanine + H2O + H(+) = xanthine + NH4(+). The protein operates within purine metabolism; guanine degradation; xanthine from guanine: step 1/1. With respect to regulation, strongly inhibited by p-chloromercuribenzoate (PCMB). Potassium cyanide (KCN) strongly inhibits activity towards 7,8-dihydropterin but has almost no effect on activity towards guanine. Pterin inhibits activity towards guanine but has little effect on activity towards 7,8-dihydropterin. Catalyzes the hydrolytic deamination of guanine, producing xanthine and ammonia. Also has 7,8-dihydropterin deaminase activity, which plays a role in synthesis of the red eye pigment aurodrosopterin. The protein is Guanine deaminase of Drosophila melanogaster (Fruit fly).